Reading from the N-terminus, the 548-residue chain is Luciferin 4-monooxygenase (548 aa).

Positions 546–548 match the Microbody targeting signal motif; that stretch reads AKM.

It belongs to the ATP-dependent AMP-binding enzyme family. It depends on Mg(2+) as a cofactor.

Its subcellular location is the peroxisome. The enzyme catalyses firefly D-luciferin + ATP + O2 = firefly oxyluciferin + hnu + AMP + CO2 + diphosphate. Functionally, produces green light with a wavelength of 544 nm. This Nipponoluciola cruciata (Genji firefly) protein is Luciferin 4-monooxygenase.